The following is an 80-amino-acid chain: Translation initiation factor IF-1, chloroplastic (80 aa).

The S1-like domain maps to 1 to 72; the sequence is MKEHDLINME…TKGRILYRIR (72 aa).

It belongs to the IF-1 family. As to quaternary structure, component of the 30S ribosomal translation pre-initiation complex which assembles on the 30S ribosome in the order IF-2 and IF-3, IF-1 and N-formylmethionyl-tRNA(fMet); mRNA recruitment can occur at any time during PIC assembly.

The protein resides in the plastid. Its subcellular location is the chloroplast. Functionally, one of the essential components for the initiation of protein synthesis. Stabilizes the binding of IF-2 and IF-3 on the 30S subunit to which N-formylmethionyl-tRNA(fMet) subsequently binds. Helps modulate mRNA selection, yielding the 30S pre-initiation complex (PIC). Upon addition of the 50S ribosomal subunit IF-1, IF-2 and IF-3 are released leaving the mature 70S translation initiation complex. This Psilotum nudum (Whisk fern) protein is Translation initiation factor IF-1, chloroplastic.